A 239-amino-acid chain; its full sequence is Probable GTP-binding protein EngB (239 aa).

The EngB-type G domain occupies 23-219 (QVPEIAFAGR…NDKILELLGL (197 aa)). GTP-binding positions include 31 to 38 (GRSNAGKS), 58 to 62 (GRTQH), 92 to 95 (DLPG), 159 to 162 (TKSD), and 193 to 200 (FTAQLFSA). Residues Ser-38 and Thr-60 each coordinate Mg(2+).

It belongs to the TRAFAC class TrmE-Era-EngA-EngB-Septin-like GTPase superfamily. EngB GTPase family. The cofactor is Mg(2+).

Functionally, necessary for normal cell division and for the maintenance of normal septation. This chain is Probable GTP-binding protein EngB, found in Herminiimonas arsenicoxydans.